A 332-amino-acid polypeptide reads, in one-letter code: Homoserine kinase (332 aa).

It belongs to the pseudomonas-type ThrB family.

It catalyses the reaction L-homoserine + ATP = O-phospho-L-homoserine + ADP + H(+). The protein operates within amino-acid biosynthesis; L-threonine biosynthesis; L-threonine from L-aspartate: step 4/5. This is Homoserine kinase from Burkholderia multivorans (strain ATCC 17616 / 249).